The sequence spans 931 residues: Synaptopodin (931 aa).

Disordered stretches follow at residues Glu56–Ile78 and Ala113–Tyr243. A Phosphoserine modification is found at Ser134. Basic and acidic residues predominate over residues Thr136–Gln148. 2 stretches are compositionally biased toward polar residues: residues Gln153–Gly164 and Pro188–Pro200. Phosphoserine is present on residues Ser202, Ser222, and Ser258. Residues Pro214–Ser232 are compositionally biased toward low complexity. The interval Gly280–Leu420 is disordered. Polar residues-rich tracts occupy residues His282 to Ser293 and Ile309 to Ser370. The segment covering Asp373–Arg384 has biased composition (basic and acidic residues). A phosphoserine mark is found at Ser490 and Ser514. 2 disordered regions span residues Arg542–Val591 and Ser691–Gly711. A Phosphothreonine modification is found at Thr549. The PPxY motif signature appears at Pro551 to Tyr554. A compositionally biased stretch (polar residues) spans Glu556–Arg568. A Phosphoserine modification is found at Ser569. Positions Ser569 to Ser580 are enriched in low complexity. The PPxY motif signature appears at Pro570–Tyr573. Phosphoserine occurs at positions 691, 742, 746, and 767. Phosphothreonine is present on Thr771. Positions Ser775 to Gly918 are disordered. A compositionally biased stretch (low complexity) spans Ser816–Ser841. Phosphoserine is present on Ser835. Arg850 carries the omega-N-methylarginine modification. Ser856 carries the phosphoserine modification. Positions Val874 to Ser895 are enriched in polar residues.

Belongs to the synaptopodin family. In terms of assembly, interacts with BAIAP1. Interacts with actin. Interacts (via PPxY motifs) with WWC1 (via WW domains). In terms of processing, O-glycosylated. In terms of tissue distribution, expressed at high levels in brain and at moderate, but still significant levels in the heart, skeletal muscle, lung and kidney. In brain, expressed in the cerebral cortex, hippocampus, olfactory bulb and striatum.

It localises to the cytoplasm. The protein localises to the cytoskeleton. Its subcellular location is the cell junction. The protein resides in the tight junction. It is found in the perikaryon. It localises to the cell projection. The protein localises to the dendritic spine. Its subcellular location is the postsynaptic density. The protein resides in the synapse. It is found in the cytosol. In terms of biological role, actin-associated protein that may play a role in modulating actin-based shape and motility of dendritic spines and renal podocyte foot processes. Seems to be essential for the formation of spine apparatuses in spines of telencephalic neurons, which is involved in synaptic plasticity. The chain is Synaptopodin (Synpo) from Rattus norvegicus (Rat).